The following is a 230-amino-acid chain: Exosome complex component Rrp4 (230 aa).

Residues 60–129 (NDKVIGKVID…EIKESWLSLK (70 aa)) form the S1 motif domain. The 59-residue stretch at 137-195 (EEGSIIYIKAPKVPRVIGKAGNMINMIKSETNTKIIVGQNGLIWIDGEPENVDLAINAI) folds into the KH domain.

The protein belongs to the RRP4 family. Component of the archaeal exosome complex. Forms a trimer of Rrp4 and/or Csl4 subunits. The trimer associates with a hexameric ring-like arrangement composed of 3 Rrp41-Rrp42 heterodimers.

The protein resides in the cytoplasm. In terms of biological role, non-catalytic component of the exosome, which is a complex involved in RNA degradation. Increases the RNA binding and the efficiency of RNA degradation. Confers strong poly(A) specificity to the exosome. The chain is Exosome complex component Rrp4 from Picrophilus torridus (strain ATCC 700027 / DSM 9790 / JCM 10055 / NBRC 100828 / KAW 2/3).